The chain runs to 498 residues: ATP synthase subunit beta, chloroplastic (498 aa).

172–179 is an ATP binding site; that stretch reads GGAGVGKT.

It belongs to the ATPase alpha/beta chains family. In terms of assembly, F-type ATPases have 2 components, CF(1) - the catalytic core - and CF(0) - the membrane proton channel. CF(1) has five subunits: alpha(3), beta(3), gamma(1), delta(1), epsilon(1). CF(0) has four main subunits: a(1), b(1), b'(1) and c(9-12).

The protein localises to the plastid. It is found in the chloroplast thylakoid membrane. It catalyses the reaction ATP + H2O + 4 H(+)(in) = ADP + phosphate + 5 H(+)(out). Produces ATP from ADP in the presence of a proton gradient across the membrane. The catalytic sites are hosted primarily by the beta subunits. The sequence is that of ATP synthase subunit beta, chloroplastic from Triticum aestivum (Wheat).